Here is a 240-residue protein sequence, read N- to C-terminus: 1-acyl-sn-glycerol-3-phosphate acyltransferase (240 aa).

The HXXXXD motif motif lies at 73 to 78; that stretch reads HQNNYD.

The protein belongs to the 1-acyl-sn-glycerol-3-phosphate acyltransferase family.

It localises to the cell inner membrane. The catalysed reaction is a 1-acyl-sn-glycero-3-phosphate + an acyl-CoA = a 1,2-diacyl-sn-glycero-3-phosphate + CoA. It functions in the pathway phospholipid metabolism; CDP-diacylglycerol biosynthesis; CDP-diacylglycerol from sn-glycerol 3-phosphate: step 2/3. In terms of biological role, converts lysophosphatidic acid (LPA) into phosphatidic acid by incorporating acyl moiety at the 2 position. This Haemophilus influenzae (strain ATCC 51907 / DSM 11121 / KW20 / Rd) protein is 1-acyl-sn-glycerol-3-phosphate acyltransferase (plsC).